We begin with the raw amino-acid sequence, 134 residues long: Small ribosomal subunit protein uS8c (134 aa).

This sequence belongs to the universal ribosomal protein uS8 family. Part of the 30S ribosomal subunit.

Its subcellular location is the plastid. It is found in the chloroplast. In terms of biological role, one of the primary rRNA binding proteins, it binds directly to 16S rRNA central domain where it helps coordinate assembly of the platform of the 30S subunit. In Lepidium virginicum (Virginia pepperweed), this protein is Small ribosomal subunit protein uS8c (rps8).